The primary structure comprises 274 residues: Large ribosomal subunit protein uL2 (274 aa).

A disordered region spans residues 223–274 (VAMNPVDHPHGGGEGRTSGGRHPVSPWGMPTKGFKTRKNKSTDKYIVRRRNK).

This sequence belongs to the universal ribosomal protein uL2 family. In terms of assembly, part of the 50S ribosomal subunit. Forms a bridge to the 30S subunit in the 70S ribosome.

In terms of biological role, one of the primary rRNA binding proteins. Required for association of the 30S and 50S subunits to form the 70S ribosome, for tRNA binding and peptide bond formation. It has been suggested to have peptidyltransferase activity; this is somewhat controversial. Makes several contacts with the 16S rRNA in the 70S ribosome. The polypeptide is Large ribosomal subunit protein uL2 (Aliivibrio salmonicida (strain LFI1238) (Vibrio salmonicida (strain LFI1238))).